The following is an 878-amino-acid chain: Alanine--tRNA ligase (878 aa).

Zn(2+) contacts are provided by His-564, His-568, Cys-666, and His-670.

Belongs to the class-II aminoacyl-tRNA synthetase family. Homotetramer. Zn(2+) serves as cofactor.

It localises to the cytoplasm. It carries out the reaction tRNA(Ala) + L-alanine + ATP = L-alanyl-tRNA(Ala) + AMP + diphosphate. Its function is as follows. Catalyzes the attachment of alanine to tRNA(Ala) in a two-step reaction: alanine is first activated by ATP to form Ala-AMP and then transferred to the acceptor end of tRNA(Ala). Also edits incorrectly charged Ser-tRNA(Ala) and Gly-tRNA(Ala) via its editing domain. This chain is Alanine--tRNA ligase, found in Buchnera aphidicola subsp. Acyrthosiphon pisum (strain APS) (Acyrthosiphon pisum symbiotic bacterium).